A 734-amino-acid chain; its full sequence is Adhesion G protein-coupled receptor E5 (734 aa).

The signal sequence occupies residues 1–26 (MGGPHGGPFLLFHVLCFLLTLSEVGS). Over 27-449 (QNSKACALPC…VEDPKLALIT (423 aa)) the chain is Extracellular. Positions 28–70 (NSKACALPCPPNSSCVNGTACRCAPGFISFSGEIFTDPLESCD) constitute an EGF-like 1 domain. 9 disulfide bridges follow: C32/C42, C36/C48, C50/C69, C75/C89, C83/C98, C100/C121, C127/C140, C134/C149, and C151/C170. N39 and N44 each carry an N-linked (GlcNAc...) asparagine glycan. The 52-residue stretch at 71 to 122 (DINECGPPSPVDCGSSADCQNTEGGYYCTCSPGYEPVSGAMIFRNESENTCR) folds into the EGF-like 2; calcium-binding domain. N-linked (GlcNAc...) asparagine glycosylation is found at N115 and N136. An EGF-like 3; calcium-binding domain is found at 123 to 171 (DVDECSSGQHQCHNSTVCFNTVGSYTCHCREGWEPKHGLKNKQKDTICK). Residues 265-441 (TYRSLDNTEL…AILMAHYDVE (177 aa)) enclose the GAIN-B domain. Residues N285, N327, N372, N403, and N418 are each glycosylated (N-linked (GlcNAc...) asparagine). Cystine bridges form between C393/C423 and C411/C425. Positions 393–441 (CAFWKKDSNGNGSWATTGCWKMGRGNGSITCQCSHLSSFAILMAHYDVE) are GPS. Residues 450-470 (KVGLALSLACLLLCILTFLLV) form a helical membrane-spanning segment. At 471-478 (RPIQGSRT) the chain is on the cytoplasmic side. The chain crosses the membrane as a helical span at residues 479–499 (TVHLHLCICLFVGSAIFLAGI). At 500–519 (ENEGGEVGTRCRLVAVLLHY) the chain is on the extracellular side. The helical transmembrane segment at 520–540 (CFLAAFCWMSLEGVELYFLVV) threads the bilayer. At 541–550 (RVFQGQGMRK) the chain is on the cytoplasmic side. Residues 551-571 (LWLCLIGYGVPLIIVGISAGA) form a helical membrane-spanning segment. Residues 572–593 (YSKGYGREKFCWLNFEGGFLWS) lie on the Extracellular side of the membrane. Residues 594–614 (FVGPVTFIVLGNAIIFVITVW) traverse the membrane as a helical segment. Residues 615 to 637 (KLTQKFSEINPDIKKLKKARVLT) lie on the Cytoplasmic side of the membrane. Residues 638–658 (ITAIAQLFVLGCTWVFGLLLF) traverse the membrane as a helical segment. The Extracellular portion of the chain corresponds to 659–662 (NPES). The helical transmembrane segment at 663–683 (WVLSYIFSILNCLQGFFLFVL) threads the bilayer. At 684 to 734 (YCLLNKKVREEYRKWACMVAGNKYSEFATTTSGSGSSHNQTQALRPSESGM) the chain is on the cytoplasmic side. The tract at residues 712-734 (TTTSGSGSSHNQTQALRPSESGM) is disordered. T713 carries the post-translational modification Phosphothreonine. A Phosphoserine modification is found at S715. Position 724 is a phosphothreonine (T724). Phosphoserine occurs at positions 730 and 732.

The protein belongs to the G-protein coupled receptor 2 family. LN-TM7 subfamily. In terms of assembly, forms a heterodimer, consisting of a large extracellular region (alpha subunit) non-covalently linked to a seven-transmembrane moiety (beta subunit). Interacts with complement decay-accelerating factor (DAF) and with chondroitin sulfate. In terms of processing, proteolytically cleaved into 2 subunits, an extracellular alpha subunit and a seven-transmembrane subunit.

It is found in the cell membrane. The protein localises to the secreted. It localises to the extracellular space. In terms of biological role, receptor potentially involved in both adhesion and signaling processes early after leukocyte activation. Plays an essential role in leukocyte migration. This Bos taurus (Bovine) protein is Adhesion G protein-coupled receptor E5.